The following is a 208-amino-acid chain: Dephospho-CoA kinase (208 aa).

A DPCK domain is found at 11–207 (VIGLTGGIAS…EYYLELAQHD (197 aa)). 19–24 (ASGKSA) contacts ATP.

This sequence belongs to the CoaE family.

It is found in the cytoplasm. It carries out the reaction 3'-dephospho-CoA + ATP = ADP + CoA + H(+). The protein operates within cofactor biosynthesis; coenzyme A biosynthesis; CoA from (R)-pantothenate: step 5/5. Its function is as follows. Catalyzes the phosphorylation of the 3'-hydroxyl group of dephosphocoenzyme A to form coenzyme A. This chain is Dephospho-CoA kinase, found in Hahella chejuensis (strain KCTC 2396).